The following is a 1368-amino-acid chain: DNA-directed RNA polymerase subunit beta (1368 aa).

The protein belongs to the RNA polymerase beta chain family. As to quaternary structure, the RNAP catalytic core consists of 2 alpha, 1 beta, 1 beta' and 1 omega subunit. When a sigma factor is associated with the core the holoenzyme is formed, which can initiate transcription.

The enzyme catalyses RNA(n) + a ribonucleoside 5'-triphosphate = RNA(n+1) + diphosphate. In terms of biological role, DNA-dependent RNA polymerase catalyzes the transcription of DNA into RNA using the four ribonucleoside triphosphates as substrates. This Legionella pneumophila (strain Corby) protein is DNA-directed RNA polymerase subunit beta.